A 185-amino-acid polypeptide reads, in one-letter code: Elongation factor P (185 aa).

The protein belongs to the elongation factor P family.

The protein localises to the cytoplasm. It functions in the pathway protein biosynthesis; polypeptide chain elongation. In terms of biological role, involved in peptide bond synthesis. Stimulates efficient translation and peptide-bond synthesis on native or reconstituted 70S ribosomes in vitro. Probably functions indirectly by altering the affinity of the ribosome for aminoacyl-tRNA, thus increasing their reactivity as acceptors for peptidyl transferase. The polypeptide is Elongation factor P (Limosilactobacillus reuteri (strain DSM 20016) (Lactobacillus reuteri)).